Here is a 155-residue protein sequence, read N- to C-terminus: Large ribosomal subunit protein uL30 (155 aa).

It belongs to the universal ribosomal protein uL30 family. Part of the 50S ribosomal subunit.

The protein is Large ribosomal subunit protein uL30 of Pyrococcus horikoshii (strain ATCC 700860 / DSM 12428 / JCM 9974 / NBRC 100139 / OT-3).